A 324-amino-acid polypeptide reads, in one-letter code: 2-oxoisovalerate dehydrogenase subunit beta (324 aa).

Thiamine diphosphate is bound by residues E29, L58–E60, Q82, and Y86–P89. Substrate-binding positions include F83–Y86 and H129. H129 serves as the catalytic Proton acceptor.

Heterotetramer of two alpha and two beta chains. Directly associated with ODBA in the E1 complex. Thiamine diphosphate serves as cofactor.

It carries out the reaction N(6)-[(R)-lipoyl]-L-lysyl-[protein] + 3-methyl-2-oxobutanoate + H(+) = N(6)-[(R)-S(8)-2-methylpropanoyldihydrolipoyl]-L-lysyl-[protein] + CO2. Functionally, the branched-chain alpha-keto dehydrogenase complex catalyzes the overall conversion of alpha-keto acids to acyl-CoA and CO(2). It contains multiple copies of three enzymatic components: branched-chain alpha-keto acid decarboxylase (E1), lipoamide acyltransferase (E2) and lipoamide dehydrogenase (E3). The sequence is that of 2-oxoisovalerate dehydrogenase subunit beta from Thermus thermophilus (strain ATCC BAA-163 / DSM 7039 / HB27).